The following is a 192-amino-acid chain: Phosphoheptose isomerase (192 aa).

One can recognise an SIS domain in the interval 37-192 (LADSFKAGGK…IQLIEKEMVK (156 aa)). Residue 52-54 (NGG) coordinates substrate. Zn(2+)-binding residues include His61 and Glu65. Residues Glu65, 93–94 (ND), 119–121 (STS), Ser124, and Gln172 contribute to the substrate site. Zn(2+)-binding residues include Gln172 and His180.

This sequence belongs to the SIS family. GmhA subfamily. Homotetramer. The cofactor is Zn(2+).

It is found in the cytoplasm. It carries out the reaction 2 D-sedoheptulose 7-phosphate = D-glycero-alpha-D-manno-heptose 7-phosphate + D-glycero-beta-D-manno-heptose 7-phosphate. It participates in carbohydrate biosynthesis; D-glycero-D-manno-heptose 7-phosphate biosynthesis; D-glycero-alpha-D-manno-heptose 7-phosphate and D-glycero-beta-D-manno-heptose 7-phosphate from sedoheptulose 7-phosphate: step 1/1. In terms of biological role, catalyzes the isomerization of sedoheptulose 7-phosphate in D-glycero-D-manno-heptose 7-phosphate. The sequence is that of Phosphoheptose isomerase from Salmonella dublin (strain CT_02021853).